Here is a 533-residue protein sequence, read N- to C-terminus: NADH-quinone oxidoreductase subunit N (533 aa).

The next 14 membrane-spanning stretches (helical) occupy residues 13-33 (VWPL…EGFV), 40-60 (LVQA…TILV), 87-107 (PALF…LLFA), 141-161 (HTEV…FAAA), 164-184 (LLTL…LSGL), 200-220 (FMLG…VYGF), 243-263 (LLIG…AVPF), 275-295 (PTAV…GAML), 310-330 (QPML…IAIV), 337-357 (MLAY…LGVQ), 373-393 (VLFY…VVTL), 417-437 (VAGV…TAGF), 451-471 (GAWP…FFYV), and 502-522 (ATIF…GPVL).

It belongs to the complex I subunit 2 family. As to quaternary structure, NDH-1 is composed of 14 different subunits. Subunits NuoA, H, J, K, L, M, N constitute the membrane sector of the complex.

Its subcellular location is the cell membrane. The catalysed reaction is a quinone + NADH + 5 H(+)(in) = a quinol + NAD(+) + 4 H(+)(out). Its function is as follows. NDH-1 shuttles electrons from NADH, via FMN and iron-sulfur (Fe-S) centers, to quinones in the respiratory chain. The immediate electron acceptor for the enzyme in this species is believed to be a menaquinone. Couples the redox reaction to proton translocation (for every two electrons transferred, four hydrogen ions are translocated across the cytoplasmic membrane), and thus conserves the redox energy in a proton gradient. This Nocardioides sp. (strain ATCC BAA-499 / JS614) protein is NADH-quinone oxidoreductase subunit N.